The sequence spans 136 residues: Small ribosomal subunit protein eS17A (136 aa).

The protein belongs to the eukaryotic ribosomal protein eS17 family. In terms of assembly, component of the small ribosomal subunit (SSU). Mature yeast ribosomes consist of a small (40S) and a large (60S) subunit. The 40S small subunit contains 1 molecule of ribosomal RNA (18S rRNA) and 33 different proteins (encoded by 57 genes). The large 60S subunit contains 3 rRNA molecules (25S, 5.8S and 5S rRNA) and 46 different proteins (encoded by 81 genes).

The protein localises to the cytoplasm. Functionally, component of the ribosome, a large ribonucleoprotein complex responsible for the synthesis of proteins in the cell. The small ribosomal subunit (SSU) binds messenger RNAs (mRNAs) and translates the encoded message by selecting cognate aminoacyl-transfer RNA (tRNA) molecules. The large subunit (LSU) contains the ribosomal catalytic site termed the peptidyl transferase center (PTC), which catalyzes the formation of peptide bonds, thereby polymerizing the amino acids delivered by tRNAs into a polypeptide chain. The nascent polypeptides leave the ribosome through a tunnel in the LSU and interact with protein factors that function in enzymatic processing, targeting, and the membrane insertion of nascent chains at the exit of the ribosomal tunnel. The polypeptide is Small ribosomal subunit protein eS17A (Saccharomyces cerevisiae (strain ATCC 204508 / S288c) (Baker's yeast)).